Consider the following 232-residue polypeptide: Large ribosomal subunit protein uL1 (232 aa).

Belongs to the universal ribosomal protein uL1 family. Part of the 50S ribosomal subunit.

Binds directly to 23S rRNA. The L1 stalk is quite mobile in the ribosome, and is involved in E site tRNA release. Functionally, protein L1 is also a translational repressor protein, it controls the translation of the L11 operon by binding to its mRNA. In Chlamydia trachomatis serovar L2b (strain UCH-1/proctitis), this protein is Large ribosomal subunit protein uL1.